We begin with the raw amino-acid sequence, 305 residues long: Putative lipid kinase SaurJH9_0749 (305 aa).

The DAGKc domain maps to 3-139 (NKYTHGVLFY…YDVIKINNQY (137 aa)). ATP contacts are provided by residues S44, 74 to 80 (GDGTVNE), and T101. Mg(2+)-binding residues include S220, D223, and E225. Residue E281 is the Proton acceptor of the active site.

This sequence belongs to the diacylglycerol/lipid kinase family. It depends on Mg(2+) as a cofactor.

In terms of biological role, may catalyze the ATP-dependent phosphorylation of lipids other than diacylglycerol (DAG). This Staphylococcus aureus (strain JH9) protein is Putative lipid kinase SaurJH9_0749.